Reading from the N-terminus, the 331-residue chain is Putative sigma L-dependent transcriptional regulator YplP (331 aa).

In terms of domain architecture, Sigma-54 factor interaction spans 12-213; that stretch reads HLIGEHQTFL…LKNAADYMAA (202 aa). 95–104 provides a ligand contact to ATP; it reads AVRGTLFLDD.

Functionally, may play a role in cold adaptation. The chain is Putative sigma L-dependent transcriptional regulator YplP (yplP) from Bacillus subtilis (strain 168).